The sequence spans 70 residues: Small ribosomal subunit protein bS21 (70 aa).

Residues 39–70 (EKPTTERKRKKAAAVSRTRKRLRSQMLPKKLY) form a disordered region. Over residues 45–61 (RKRKKAAAVSRTRKRLR) the composition is skewed to basic residues.

This sequence belongs to the bacterial ribosomal protein bS21 family.

This Ralstonia nicotianae (strain ATCC BAA-1114 / GMI1000) (Ralstonia solanacearum) protein is Small ribosomal subunit protein bS21.